We begin with the raw amino-acid sequence, 132 residues long: MAGRGKTLGSGVAKKSTSRSSKAGLQFPVGRIARFLKNGKYATRVGAGAPVYLAAVLEYLAAEVLELAGNAARDNKKTRIVPRHIQLAVRNDEELSKLLGDVTIANGGVMPNIHSLLLPKKAGASKPSADED.

This sequence belongs to the histone H2A family. As to quaternary structure, the nucleosome is a histone octamer containing two molecules each of H2A, H2B, H3 and H4 assembled in one H3-H4 heterotetramer and two H2A-H2B heterodimers. The octamer wraps approximately 147 bp of DNA. Post-translationally, not ubiquitinated. As to expression, expressed mainly in non-dividing tissues of the plant. Also found in meristems and dividing cells.

It is found in the nucleus. Its subcellular location is the chromosome. In terms of biological role, core component of nucleosome. Nucleosomes wrap and compact DNA into chromatin, limiting DNA accessibility to the cellular machineries which require DNA as a template. Histones thereby play a central role in transcription regulation, DNA repair, DNA replication and chromosomal stability. DNA accessibility is regulated via a complex set of post-translational modifications of histones, also called histone code, and nucleosome remodeling. The protein is Probable histone H2A.2 of Arabidopsis thaliana (Mouse-ear cress).